The following is a 186-amino-acid chain: Serine hydrolase RBBP9 (186 aa).

The interval 56 to 70 is retinoblastoma protein binding; sequence LPFMETELHCDEKTI. The segment at 63–67 is involved in binding to RB1; the sequence is LHCDE. Residues Ser75, Asp138, and His165 each act as charge relay system in the active site.

It belongs to the RBBP9 family. In terms of assembly, interacts with RB1; the interaction disrupts RB1 binding to E2F1. Interacts with RBL1 and RBL2. Expressed in spleen.

The enzyme catalyses valacyclovir + H2O = acyclovir + L-valine + H(+). Serine hydrolase. Catalyzes the hydrolytic activation of amino acid ester of the antiviral prodrug valacyclovir to its corresponding active drug, acyclovir. May negatively regulate basal or autocrine TGF-beta signaling by suppressing SMAD2-SMAD3 phosphorylation. May play a role in the transformation process due to its capacity to confer resistance to the growth-inhibitory effects of TGF-beta through interaction with RB1 and the subsequent displacement of E2F1. This chain is Serine hydrolase RBBP9 (Rbbp9), found in Mus musculus (Mouse).